Here is a 136-residue protein sequence, read N- to C-terminus: Histone H3.3 (136 aa).

The disordered stretch occupies residues 1–45 (MARTKQTARKSTGGKAPRKQLASKAARKAAPATGGVKKPHRYRPP). Lys-5 is subject to N6,N6,N6-trimethyllysine; alternate. Lys-5 is subject to N6,N6-dimethyllysine; alternate. N6-methyllysine; alternate is present on residues Lys-5 and Lys-10. N6-acetyllysine; alternate is present on Lys-10. Residue Ser-11 is modified to Phosphoserine. The residue at position 15 (Lys-15) is an N6,N6-dimethyllysine; alternate. 5 positions are modified to N6-acetyllysine; alternate: Lys-15, Lys-19, Lys-24, Lys-28, and Lys-37. Lys-19, Lys-24, Lys-28, and Lys-37 each carry N6-methyllysine; alternate. The segment covering 19 to 32 (KQLASKAARKAAPA) has biased composition (low complexity). Lys-28 and Lys-37 each carry N6,N6,N6-trimethyllysine; alternate. N6,N6-dimethyllysine; alternate occurs at positions 28 and 37. N6-acetyllysine is present on residues Lys-57 and Lys-65. At Lys-80 the chain carries N6,N6,N6-trimethyllysine; alternate. At Lys-80 the chain carries N6,N6-dimethyllysine; alternate. The residue at position 80 (Lys-80) is an N6-methyllysine; alternate. Lys-123 is modified (N6-acetyllysine).

Belongs to the histone H3 family. The nucleosome is a histone octamer containing two molecules each of H2A, H2B, H3 and H4 assembled in one H3-H4 heterotetramer and two H2A-H2B heterodimers. The octamer wraps approximately 147 bp of DNA. In terms of processing, phosphorylated by ark1 to form H3S10ph in a cell cycle-dependent manner during mitosis and meiosis. H3S10ph is also formed by ssp2, promotes subsequent H3K14ac formation by gcn5, and is required for transcriptional activation through TBP recruitment to the promoters. Dephosphorylation is performed by sds21. Post-translationally, mono-, di- and trimethylated by the COMPASS complex to form H3K4me1/2/3. H3K4me activates gene expression by regulating transcription elongation and plays a role in telomere length maintenance. H3K4me enrichment correlates with transcription levels, and occurs in a 5' to 3' gradient with H3K4me3 enrichment at the 5'-end of genes, shifting to H3K4me2 and then H3K4me1. Methylated by clr4 to form H3K9me1. H3K9me1 represents a specific tag for epigenetic transcriptional repression by recruiting swi6/HP1 to methylated histones. Targeting to histone probably involves clr3 and rik1. Essential for silencing of centromeres and directional switching of the mating type. Methylated by set2 to form H3K36me. H3K36me represses gene expression. Methylated by dot1 to form H3K79me. H3K79me is required for association of SIR proteins with telomeric regions and for telomeric silencing. The COMPASS-mediated formation of H3K4me2/3 and the dot1-mediated formation of H3K79me require H2BK123ub1. Acetylation of histone H3 leads to transcriptional activation. H3K14ac formation by gcn5 is promoted by H3S10ph. H3K14ac can also be formed by esa1. H3K56ac formation occurs predominantly in newly synthesized H3 molecules during G1, S and G2/M of the cell cycle and may be involved in DNA repair. Acetylation at Lys-123 (H3K122ac) plays a central role in chromatin structure: localizes at the surface of the histone octamer and stimulates transcription, possibly by promoting nucleosome instability.

The protein localises to the nucleus. Its subcellular location is the chromosome. Its function is as follows. Core component of nucleosome. Nucleosomes wrap and compact DNA into chromatin, limiting DNA accessibility to the cellular machineries which require DNA as a template. Histones thereby play a central role in transcription regulation, DNA repair, DNA replication and chromosomal stability. DNA accessibility is regulated via a complex set of post-translational modifications of histones, also called histone code, and nucleosome remodeling. This is Histone H3.3 (hht3) from Schizosaccharomyces pombe (strain 972 / ATCC 24843) (Fission yeast).